Here is a 385-residue protein sequence, read N- to C-terminus: Chaperone protein DnaJ (385 aa).

The J domain maps to 5–70 (DYYEVLGVSK…ERKAAYDRYG (66 aa)). The CR-type zinc-finger motif lies at 143–221 (GLHKTINVPT…CNGHGRVEKD (79 aa)). The Zn(2+) site is built by Cys-156, Cys-159, Cys-173, Cys-176, Cys-195, Cys-198, Cys-209, and Cys-212. CXXCXGXG motif repeat units lie at residues 156-163 (CTSCEGTG), 173-180 (CPTCSGMG), 195-202 (CPTCSGLG), and 209-216 (CKTCNGHG).

It belongs to the DnaJ family. Homodimer. It depends on Zn(2+) as a cofactor.

It is found in the cytoplasm. Its function is as follows. Participates actively in the response to hyperosmotic and heat shock by preventing the aggregation of stress-denatured proteins and by disaggregating proteins, also in an autonomous, DnaK-independent fashion. Unfolded proteins bind initially to DnaJ; upon interaction with the DnaJ-bound protein, DnaK hydrolyzes its bound ATP, resulting in the formation of a stable complex. GrpE releases ADP from DnaK; ATP binding to DnaK triggers the release of the substrate protein, thus completing the reaction cycle. Several rounds of ATP-dependent interactions between DnaJ, DnaK and GrpE are required for fully efficient folding. Also involved, together with DnaK and GrpE, in the DNA replication of plasmids through activation of initiation proteins. The chain is Chaperone protein DnaJ from Ruegeria sp. (strain TM1040) (Silicibacter sp.).